The following is a 365-amino-acid chain: Alanine racemase (365 aa).

Residue Lys-32 is the Proton acceptor; specific for D-alanine of the active site. The residue at position 32 (Lys-32) is an N6-(pyridoxal phosphate)lysine. Arg-128 is a substrate binding site. Tyr-257 acts as the Proton acceptor; specific for L-alanine in catalysis. Met-305 lines the substrate pocket.

It belongs to the alanine racemase family. Pyridoxal 5'-phosphate serves as cofactor.

It carries out the reaction L-alanine = D-alanine. It participates in amino-acid biosynthesis; D-alanine biosynthesis; D-alanine from L-alanine: step 1/1. Catalyzes the interconversion of L-alanine and D-alanine. May also act on other amino acids. The chain is Alanine racemase (alr) from Francisella tularensis subsp. tularensis (strain SCHU S4 / Schu 4).